We begin with the raw amino-acid sequence, 158 residues long: pH 6 antigen (158 aa).

A signal peptide spans 1 to 26 (MKMKCFAKNALAVTTLMIAACGMANA).

In terms of assembly, forms a homomer composed of subunits assembled in a large structure.

It localises to the fimbrium. Fibrillar structure, part of fimbriae, necessary for full virulence. The polypeptide is pH 6 antigen (psaA) (Yersinia pestis).